We begin with the raw amino-acid sequence, 408 residues long: GTPase HflX (408 aa).

Positions 198-361 (PRVSLVGYTN…LIVREMERHY (164 aa)) constitute a Hflx-type G domain. GTP is bound by residues 204–211 (GYTNAGKS), 229–233 (FVTLD), 251–254 (DTVG), 317–320 (NKAD), and 339–341 (SAK). 2 residues coordinate Mg(2+): Ser-211 and Thr-231.

The protein belongs to the TRAFAC class OBG-HflX-like GTPase superfamily. HflX GTPase family. As to quaternary structure, monomer. Associates with the 50S ribosomal subunit. Mg(2+) is required as a cofactor.

The protein resides in the cytoplasm. GTPase that associates with the 50S ribosomal subunit and may have a role during protein synthesis or ribosome biogenesis. The protein is GTPase HflX of Spirochaeta thermophila (strain ATCC 49972 / DSM 6192 / RI 19.B1).